The chain runs to 198 residues: Dynein axonemal light chain 1 (198 aa).

LRR repeat units follow at residues 49–70 (ACKHLALSTNNIEKISSLSGME), 71–92 (NLRILSLGRNLIKKIENLDAVA), 94–115 (TLEELWISYNQIASLSGIEKLV), and 116–137 (NLRVLYMSNNKITNWGEIDKLA). One can recognise an LRRCT domain in the interval 157-195 (KENNATSEYRIEVVKRLPNLKKLDGMPVDVDEREQANVA).

This sequence belongs to the dynein light chain LC1-type family. In terms of assembly, interacts with OCAD2, a outer arm dynein heavy chain. Interacts with tubulin (previously called p45) located within the A-tubule of the outer doublets in a ATP-independent manner.

The protein resides in the cytoplasm. It is found in the cytoskeleton. Its subcellular location is the flagellum axoneme. Its function is as follows. Part of the multisubunit axonemal ATPase complexes that generate the force for flagellar motility and govern beat frequency. Component of the outer arm dynein (ODA). May be involved in a mechanosensory feedback mechanism controlling ODA activity based on external conformational cues by tethering the outer arm dynein heavy chain (ODA2) to the A-tubule of the outer doublet microtubules within the axoneme. This is Dynein axonemal light chain 1 from Chlamydomonas reinhardtii (Chlamydomonas smithii).